The primary structure comprises 223 residues: Putative N-acetylmannosamine-6-phosphate 2-epimerase (223 aa).

Belongs to the NanE family.

It catalyses the reaction an N-acyl-D-glucosamine 6-phosphate = an N-acyl-D-mannosamine 6-phosphate. The protein operates within amino-sugar metabolism; N-acetylneuraminate degradation; D-fructose 6-phosphate from N-acetylneuraminate: step 3/5. Converts N-acetylmannosamine-6-phosphate (ManNAc-6-P) to N-acetylglucosamine-6-phosphate (GlcNAc-6-P). In Clostridioides difficile (strain 630) (Peptoclostridium difficile), this protein is Putative N-acetylmannosamine-6-phosphate 2-epimerase.